The primary structure comprises 462 residues: Lysophospholipid acyltransferase 1 (462 aa).

9 helical membrane passes run 9–29 (SIGV…TIPV), 52–72 (FLSY…PMTI), 84–104 (CGII…VFYM), 158–178 (SLIE…GPVY), 211–231 (AILQ…QYPL), 263–283 (YFIW…FSGW), 353–373 (AVWH…ALMI), 396–416 (IMVF…AVGF), and 431–451 (VYYI…VVPA). The active site involves His356.

This sequence belongs to the membrane-bound acyltransferase family. As to expression, expressed in roots, rosette leaves, petals, stigma, chalazal endosperm of developing seeds and vascular bundles of siliques.

The protein localises to the endoplasmic reticulum membrane. The catalysed reaction is a 1-acyl-sn-glycero-3-phosphocholine + an acyl-CoA = a 1,2-diacyl-sn-glycero-3-phosphocholine + CoA. It carries out the reaction 1-(9Z-octadecenoyl)-sn-glycero-3-phosphocholine + (9Z)-octadecenoyl-CoA = 1,2-di-(9Z-octadecenoyl)-sn-glycero-3-phosphocholine + CoA. It catalyses the reaction 1-(9Z-octadecenoyl)-sn-glycero-3-phosphocholine + (9Z,12Z)-octadecadienoyl-CoA = 1-(9Z)-octadecenoyl-2-(9Z,12Z)-octadecadienoyl-sn-glycero-3-phosphocholine + CoA. The enzyme catalyses (9Z,12Z,15Z)-octadecatrienoyl-CoA + 1-(9Z-octadecenoyl)-sn-glycero-3-phosphocholine = 1-(9Z-octadecaenoyl)-2-(9Z,12Z,15Z-octadecatrienoyl)-sn-glycero-3-phosphocholine + CoA. The catalysed reaction is a 1-acyl-sn-glycero-3-phosphoethanolamine + an acyl-CoA = a 1,2-diacyl-sn-glycero-3-phosphoethanolamine + CoA. It carries out the reaction a 1-acyl-sn-glycero-3-phospho-L-serine + an acyl-CoA = a 1,2-diacyl-sn-glycero-3-phospho-L-serine + CoA. Lysophospholipid acyltransferase with broad specificity. Mediates the conversion of lysophosphatidylethanolamine (1-acyl-sn-glycero-3-phosphoethanolamine or LPE) into phosphatidylethanolamine (1,2-diacyl-sn-glycero-3-phosphoethanolamine or PE) (LPEAT activity). Catalyzes the acylation of lysophosphatidylserine (1-acyl-2-hydroxy-sn-glycero-3-phospho-L-serine or LPS) into phosphatidylserine (1,2-diacyl-sn-glycero-3-phospho-L-serine or PS) (LPSAT activity). Can convert lysophosphatidylcholine (1-acyl-sn-glycero-3-phosphocholine or LPC) into phosphatidylcholine (1,2-diacyl-sn-glycero-3-phosphocholine or PC) (LPCAT activity). Exhibits preference for C18-unsaturated acyl-CoA when transferring an acyl group to lysophosphatidylcholine. Can also utilize lysophosphatidylglycerol (LPG) as substrate in vitro. Has neither activity towards lysophosphatidic acid (LPA) nor lysophosphatidylinositol (LPI). Lysophospholipid acyltransferases catalyze the reacylation step of the phospholipid remodeling pathway also known as the Lands cycle. The primary function of the Lands cycle is to provide a route for acyl remodeling to modify fatty acid (FA) composition of phospholipids derived from the Kennedy pathway. Is involved in PC acyl editing and phosphocholine headgroup exchange between PC and diacylglycerols. This processes control the majority of acyl fluxes through PC to provide polyunsaturated fatty acids for triacylglycerols synthesis in seeds. Involved with LPCAT2 in the direct incorporation of newly synthesized fatty acids exported form the chloroplast into PC through acyl editing. This chain is Lysophospholipid acyltransferase 1, found in Arabidopsis thaliana (Mouse-ear cress).